The following is a 358-amino-acid chain: DNA replication and repair protein RecF (358 aa).

33–40 lines the ATP pocket; the sequence is GENGAGKT.

It belongs to the RecF family.

The protein localises to the cytoplasm. Its function is as follows. The RecF protein is involved in DNA metabolism; it is required for DNA replication and normal SOS inducibility. RecF binds preferentially to single-stranded, linear DNA. It also seems to bind ATP. This is DNA replication and repair protein RecF from Deinococcus geothermalis (strain DSM 11300 / CIP 105573 / AG-3a).